The primary structure comprises 474 residues: tRNA-2-methylthio-N(6)-dimethylallyladenosine synthase (474 aa).

Positions 3–120 (KKLHIKTWGC…LPEMIDQIEA (118 aa)) constitute an MTTase N-terminal domain. [4Fe-4S] cluster-binding residues include cysteine 12, cysteine 49, cysteine 83, cysteine 157, cysteine 161, and cysteine 164. In terms of domain architecture, Radical SAM core spans 143–375 (RADGPSAFVS…QDRITQQAMR (233 aa)). The 64-residue stretch at 378 to 441 (RQMLGTVQRI…TNSLRGNFIR (64 aa)) folds into the TRAM domain.

Belongs to the methylthiotransferase family. MiaB subfamily. Monomer. It depends on [4Fe-4S] cluster as a cofactor.

The protein localises to the cytoplasm. It carries out the reaction N(6)-dimethylallyladenosine(37) in tRNA + (sulfur carrier)-SH + AH2 + 2 S-adenosyl-L-methionine = 2-methylsulfanyl-N(6)-dimethylallyladenosine(37) in tRNA + (sulfur carrier)-H + 5'-deoxyadenosine + L-methionine + A + S-adenosyl-L-homocysteine + 2 H(+). In terms of biological role, catalyzes the methylthiolation of N6-(dimethylallyl)adenosine (i(6)A), leading to the formation of 2-methylthio-N6-(dimethylallyl)adenosine (ms(2)i(6)A) at position 37 in tRNAs that read codons beginning with uridine. The chain is tRNA-2-methylthio-N(6)-dimethylallyladenosine synthase from Shewanella woodyi (strain ATCC 51908 / MS32).